The chain runs to 328 residues: DNA-directed RNA polymerase subunit alpha (328 aa).

Residues 1 to 232 (MSTQGFLKPR…DQISVFAALE (232 aa)) are alpha N-terminal domain (alpha-NTD). Positions 248–328 (IDPVLLRPVD…NWPPLGLERP (81 aa)) are alpha C-terminal domain (alpha-CTD).

It belongs to the RNA polymerase alpha chain family. Homodimer. The RNAP catalytic core consists of 2 alpha, 1 beta, 1 beta' and 1 omega subunit. When a sigma factor is associated with the core the holoenzyme is formed, which can initiate transcription.

It catalyses the reaction RNA(n) + a ribonucleoside 5'-triphosphate = RNA(n+1) + diphosphate. Functionally, DNA-dependent RNA polymerase catalyzes the transcription of DNA into RNA using the four ribonucleoside triphosphates as substrates. The protein is DNA-directed RNA polymerase subunit alpha of Bordetella bronchiseptica (strain ATCC BAA-588 / NCTC 13252 / RB50) (Alcaligenes bronchisepticus).